The sequence spans 358 residues: WD repeat-containing protein 53 (358 aa).

6 WD repeats span residues 1-38 (MAVK…AWGE), 43-80 (LGHT…VLDV), 85-123 (DSLD…ILDL), 127-166 (KVIR…LWSL), 173-225 (WITN…RIFR), and 232-270 (EQEL…LWDA). Residues 273 to 311 (EVEKKQKSPTKRTHRKKPKRGTCTKQGGNTNASVTDEEE) form a disordered region. Residues 279-294 (KSPTKRTHRKKPKRGT) are compositionally biased toward basic residues. Positions 295–306 (CTKQGGNTNASV) are enriched in polar residues. The WD 7 repeat unit spans residues 314-355 (NILPKLNIEHGEKVNWLLGTKIKGHQNILVADQTSCISVYPL).

This sequence belongs to the WD repeat WDR53 family.

The chain is WD repeat-containing protein 53 (WDR53) from Homo sapiens (Human).